A 741-amino-acid chain; its full sequence is Multifunctional procollagen lysine hydroxylase and glycosyltransferase LH3 (741 aa).

The N-terminal stretch at 1-27 (MAASVPEPRLLLLLLLLLPPLPPVTSA) is a signal peptide. The interval 28–293 (SDRPRGANPV…FCNLNRRTLP (266 aa)) is required for glycosyltransferase activity. 47-49 (VAT) is a UDP binding site. Asn-66 carries an N-linked (GlcNAc...) asparagine glycan. Asp-115, Asp-118, and His-256 together coordinate Mn(2+). 115 to 117 (DSY) serves as a coordination point for UDP. 259–262 (GPTK) is a binding site for UDP. Cystine bridges form between Cys-282/Cys-285 and Cys-382/Cys-388. The interval 298-523 (PPRVLLAVFV…EFGRLLSTSH (226 aa)) is accessory region. A glycan (N-linked (GlcNAc...) asparagine) is linked at Asn-551. An intrachain disulfide couples Cys-566 to Cys-701. 2-oxoglutarate-binding residues include Arg-602 and Tyr-659. A Fe2OG dioxygenase domain is found at 650-741 (RAVMNFVVRY…RYIMVSFVDP (92 aa)). 2 residues coordinate Fe cation: His-670 and Asp-672. The segment at 675 to 718 (TFTLNVALNHKGVDYEGGGCRFLRYDCRVSSPRKGWALLHPGRL) is important for dimerization. Asn-679 provides a ligand contact to 2-oxoglutarate. His-722 is a Fe cation binding site. Arg-732 is a binding site for 2-oxoglutarate.

As to quaternary structure, homodimer. Requires Fe(2+) as cofactor. The cofactor is L-ascorbate. It depends on Mn(2+) as a cofactor. In terms of tissue distribution, detected in heart and bone.

Its subcellular location is the rough endoplasmic reticulum. The protein resides in the endoplasmic reticulum lumen. It is found in the endoplasmic reticulum membrane. It localises to the secreted. The protein localises to the extracellular space. The enzyme catalyses L-lysyl-[collagen] + 2-oxoglutarate + O2 = (5R)-5-hydroxy-L-lysyl-[collagen] + succinate + CO2. It carries out the reaction (5R)-5-hydroxy-L-lysyl-[collagen] + UDP-alpha-D-galactose = (5R)-5-O-(beta-D-galactosyl)-5-hydroxy-L-lysyl-[collagen] + UDP + H(+). The catalysed reaction is (5R)-5-O-(beta-D-galactosyl)-5-hydroxy-L-lysyl-[collagen] + UDP-alpha-D-glucose = (5R)-5-O-[alpha-D-glucosyl-(1-&gt;2)-beta-D-galactosyl]-5-hydroxy-L-lysyl-[collagen] + UDP + H(+). Multifunctional enzyme that catalyzes a series of post-translational modifications on Lys residues in procollagen. Plays a redundant role in catalyzing the formation of hydroxylysine residues in -Xaa-Lys-Gly- sequences in collagens. Plays a redundant role in catalyzing the transfer of galactose onto hydroxylysine groups, giving rise to galactosyl 5-hydroxylysine. Has an essential role by catalyzing the subsequent transfer of glucose moieties, giving rise to 1,2-glucosylgalactosyl-5-hydroxylysine residues. Catalyzes hydroxylation and glycosylation of Lys residues in the MBL1 collagen-like domain, giving rise to hydroxylysine and 1,2-glucosylgalactosyl-5-hydroxylysine residues. Catalyzes hydroxylation and glycosylation of Lys residues in the ADIPOQ collagen-like domain, giving rise to hydroxylysine and 1,2-glucosylgalactosyl-5-hydroxylysine residues. Essential for normal biosynthesis and secretion of type IV collagens. Essential for normal formation of basement membranes. The polypeptide is Multifunctional procollagen lysine hydroxylase and glycosyltransferase LH3 (Plod3) (Rattus norvegicus (Rat)).